The chain runs to 136 residues: Cancer/testis antigen 62 (136 aa).

The tract at residues 1-22 (MMHTTSYRRLSPPHLTDQPSAY) is disordered.

In terms of tissue distribution, testis specific. Expressed in cancer cell lines.

This Homo sapiens (Human) protein is Cancer/testis antigen 62 (CT62).